The chain runs to 244 residues: Glutathione S-transferase theta-2 (244 aa).

A GST N-terminal domain is found at 2–82 (GLELYLDLLS…YLSSKYQVAD (81 aa)). Glutathione is bound by residues 40–41 (HM), 53–54 (KV), 66–67 (ES), and 104–107 (DNIR). In terms of domain architecture, GST C-terminal spans 88-230 (DLQARAQVHE…AKKMLPVPPP (143 aa)).

The protein belongs to the GST superfamily. Theta family. In terms of assembly, homodimer. As to expression, in liver, highest expression found in central vein limiting plate hepatocytes. Also expressed in interlobular bile duct epithelial cells. In lung, expressed in club cells and ciliated cells of the bronchiolar epithelium and in type II alveolar cells of the lung parenchyma.

Its subcellular location is the cytoplasm. The protein localises to the cytosol. The protein resides in the nucleus. It carries out the reaction RX + glutathione = an S-substituted glutathione + a halide anion + H(+). Its function is as follows. Conjugation of reduced glutathione to a wide number of exogenous and endogenous hydrophobic electrophiles. This chain is Glutathione S-transferase theta-2, found in Mus musculus (Mouse).